The primary structure comprises 112 residues: T cell receptor alpha variable 21 (112 aa).

A signal peptide spans 1-19 (METLLGLLILWLQLQWVSS). Residues 21 to 112 (QEVTQIPAAL…DSATYLCAVR (92 aa)) form the Ig-like domain. N-linked (GlcNAc...) asparagine glycans are attached at residues Asn-41 and Asn-82. Cysteines 42 and 109 form a disulfide.

Alpha-beta TR is a heterodimer composed of an alpha and beta chain; disulfide-linked. The alpha-beta TR is associated with the transmembrane signaling CD3 coreceptor proteins to form the TR-CD3 (TcR or TCR). The assembly of alpha-beta TR heterodimers with CD3 occurs in the endoplasmic reticulum where a single alpha-beta TR heterodimer associates with one CD3D-CD3E heterodimer, one CD3G-CD3E heterodimer and one CD247 homodimer forming a stable octameric structure. CD3D-CD3E and CD3G-CD3E heterodimers preferentially associate with TR alpha and TR beta chains, respectively. The association of the CD247 homodimer is the last step of TcR assembly in the endoplasmic reticulum and is required for transport to the cell surface.

Its subcellular location is the cell membrane. In terms of biological role, v region of the variable domain of T cell receptor (TR) alpha chain that participates in the antigen recognition. Alpha-beta T cell receptors are antigen specific receptors which are essential to the immune response and are present on the cell surface of T lymphocytes. Recognize peptide-major histocompatibility (MH) (pMH) complexes that are displayed by antigen presenting cells (APC), a prerequisite for efficient T cell adaptive immunity against pathogens. Binding of alpha-beta TR to pMH complex initiates TR-CD3 clustering on the cell surface and intracellular activation of LCK that phosphorylates the ITAM motifs of CD3G, CD3D, CD3E and CD247 enabling the recruitment of ZAP70. In turn ZAP70 phosphorylates LAT, which recruits numerous signaling molecules to form the LAT signalosome. The LAT signalosome propagates signal branching to three major signaling pathways, the calcium, the mitogen-activated protein kinase (MAPK) kinase and the nuclear factor NF-kappa-B (NF-kB) pathways, leading to the mobilization of transcription factors that are critical for gene expression and essential for T cell growth and differentiation. The T cell repertoire is generated in the thymus, by V-(D)-J rearrangement. This repertoire is then shaped by intrathymic selection events to generate a peripheral T cell pool of self-MH restricted, non-autoaggressive T cells. Post-thymic interaction of alpha-beta TR with the pMH complexes shapes TR structural and functional avidity. This is T cell receptor alpha variable 21 from Homo sapiens (Human).